A 121-amino-acid chain; its full sequence is Protein MGF 110-14L (121 aa).

The first 17 residues, 1-17 (MKVLLGLLLGYSVLILA), serve as a signal peptide directing secretion.

It belongs to the asfivirus MGF 110 family.

The sequence is that of Protein MGF 110-14L from African swine fever virus (isolate Portugal/Lis 57/1957) (ASFV).